The sequence spans 157 residues: Small ribosomal subunit protein uS7 (157 aa).

This sequence belongs to the universal ribosomal protein uS7 family. As to quaternary structure, part of the 30S ribosomal subunit. Contacts proteins S9 and S11.

In terms of biological role, one of the primary rRNA binding proteins, it binds directly to 16S rRNA where it nucleates assembly of the head domain of the 30S subunit. Is located at the subunit interface close to the decoding center, probably blocks exit of the E-site tRNA. This Francisella philomiragia subsp. philomiragia (strain ATCC 25017 / CCUG 19701 / FSC 153 / O#319-036) protein is Small ribosomal subunit protein uS7.